The sequence spans 671 residues: UvrABC system protein B (671 aa).

In terms of domain architecture, Helicase ATP-binding spans 25-412 (EGIDAGLAHQ…AGRIVEQVVR (388 aa)). Residue 38-45 (GVTGSGKT) participates in ATP binding. A Beta-hairpin motif is present at residues 91–114 (YYDYYQPEAYVPSSDTFIEKDASI). Residues 429 to 582 (QVDDLLSEIH…QIAFNLEHGI (154 aa)) form the Helicase C-terminal domain. Residues 601–624 (PGSRSKKRKGMAKAAEENARYENE) are disordered. Over residues 614 to 624 (AAEENARYENE) the composition is skewed to basic and acidic residues. A UVR domain is found at 632–667 (NKRIRQLEEKMYQLARDLEFEAAAQMRDEIGKLRER).

The protein belongs to the UvrB family. In terms of assembly, forms a heterotetramer with UvrA during the search for lesions. Interacts with UvrC in an incision complex.

The protein resides in the cytoplasm. In terms of biological role, the UvrABC repair system catalyzes the recognition and processing of DNA lesions. A damage recognition complex composed of 2 UvrA and 2 UvrB subunits scans DNA for abnormalities. Upon binding of the UvrA(2)B(2) complex to a putative damaged site, the DNA wraps around one UvrB monomer. DNA wrap is dependent on ATP binding by UvrB and probably causes local melting of the DNA helix, facilitating insertion of UvrB beta-hairpin between the DNA strands. Then UvrB probes one DNA strand for the presence of a lesion. If a lesion is found the UvrA subunits dissociate and the UvrB-DNA preincision complex is formed. This complex is subsequently bound by UvrC and the second UvrB is released. If no lesion is found, the DNA wraps around the other UvrB subunit that will check the other stand for damage. This chain is UvrABC system protein B, found in Pseudomonas syringae pv. syringae (strain B728a).